A 321-amino-acid polypeptide reads, in one-letter code: Malate dehydrogenase (321 aa).

NAD(+) is bound by residues 11–16 (GSGNIG) and Asp35. Substrate contacts are provided by Arg84 and Arg90. NAD(+)-binding positions include Asn97 and 120 to 122 (ITN). The substrate site is built by Asn122 and Arg153. Catalysis depends on His177, which acts as the Proton acceptor.

It belongs to the LDH/MDH superfamily. MDH type 3 family.

The catalysed reaction is (S)-malate + NAD(+) = oxaloacetate + NADH + H(+). In terms of biological role, catalyzes the reversible oxidation of malate to oxaloacetate. This is Malate dehydrogenase from Rickettsia peacockii (strain Rustic).